We begin with the raw amino-acid sequence, 517 residues long: Histone H4 transcription factor (517 aa).

3 C2H2-type zinc fingers span residues 15–39 (LQCEWGSCSFVCSTMEKFFEHVTQH), 129–153 (FLCLWEHCENSFDNPEWFYRHVEAH), and 169–193 (VLCGWKGCTCTFKDRSKLREHLRSH). The C2H2-type 4; degenerate zinc finger occupies 199–221 (VACPTCGGMFANNTKFLDHIRRQ). 5 consecutive C2H2-type zinc fingers follow at residues 229–251 (FQCSHCSKRFATERLLRDHMRNH), 255–278 (YKCPLCDMTCPLPSSLRNHMRFRH), 284–306 (FKCDCCDYSCKNLIDLQKHLDTH), 312–337 (YRCDFENCTFSARSLCSIKSHYRKVH), and 345–368 (YKCHVCDKCFTRGNNLTVHLRKKH). The interaction with NPAT stretch occupies residues 373–517 (PSGHPRFRYK…IAEEPEIQMV (145 aa)). Residues 374 to 407 (SGHPRFRYKEHEDGYMRLQLVRYESVELTQQLLR) form a required for activation of histone H4 transcription and contributes to DNA-binding region. Residues 431–460 (TVPGEPGRKEEEEEGKGSEGTALSASQDNP) form a disordered region. The span at 451-460 (TALSASQDNP) shows a compositional bias: polar residues.

In terms of assembly, binds MBD2 and a histone deacetylase complex. Interacts with NPAT. Ubiquitinated. Ubiquitination may lead to proteasome-mediated degradation. Ubiquitous. Highly expressed in brain, heart, skeletal muscle, spleen, kidney, small intestine, placenta and liver.

It localises to the nucleus. Functionally, transcriptional repressor that binds to the consensus sequence 5'-CGGACGTT-3' and to the RB1 promoter. Transcriptional activator that promotes histone H4 gene transcription at the G1/S phase transition in conjunction with NPAT. Also activates transcription of the ATM and PRKDC genes. Autoregulates its expression by associating with its own promoter. This Homo sapiens (Human) protein is Histone H4 transcription factor (HINFP).